The following is a 289-amino-acid chain: uncharacterized protein (289 aa).

The signal sequence occupies residues 1–23 (MIKNYKLLLFTTFTLFFITFVSG). 4 N-linked (GlcNAc...) asparagine glycosylation sites follow: Asn74, Asn101, Asn132, and Asn285.

Its subcellular location is the secreted. This is an uncharacterized protein from Dictyostelium discoideum (Social amoeba).